A 72-amino-acid polypeptide reads, in one-letter code: Translation initiation factor IF-1 (72 aa).

The region spanning 1–72 (MSKDDVIEMQ…TRGRITWRAK (72 aa)) is the S1-like domain.

Belongs to the IF-1 family. In terms of assembly, component of the 30S ribosomal translation pre-initiation complex which assembles on the 30S ribosome in the order IF-2 and IF-3, IF-1 and N-formylmethionyl-tRNA(fMet); mRNA recruitment can occur at any time during PIC assembly.

The protein resides in the cytoplasm. In terms of biological role, one of the essential components for the initiation of protein synthesis. Stabilizes the binding of IF-2 and IF-3 on the 30S subunit to which N-formylmethionyl-tRNA(fMet) subsequently binds. Helps modulate mRNA selection, yielding the 30S pre-initiation complex (PIC). Upon addition of the 50S ribosomal subunit IF-1, IF-2 and IF-3 are released leaving the mature 70S translation initiation complex. The protein is Translation initiation factor IF-1 of Clostridium botulinum (strain ATCC 19397 / Type A).